The sequence spans 874 residues: MKIKNAQLTKAAGLDKLKQKLAQAGSSDTKSSSEKPTTKVPEKVAKEKVVKKKSVLDSSVPTMAEHVSTETSPRRIRAKNRSSFASEDSTIPSPVSVDTESTAFSPPVVEEVVSPLESAEPEIVEPTPASIVDEPETTIQEPPPPKKEAELVVKKEPPKNVVSIKSNFGPTGKHINHLLAKTFKAPKKEDKPAPKERTGTVQTKPQQSSEVPSDKQHSSNNRQSQPFYRRDTSKRPGSDFRDRSKKDDSPKAFTGRDRYGLNDSSDDDKWRKKRVQKTKKHYDEHSVQRPTHIKVPLPITIKDLAAEMKLKASELIQKMFIHGMTYVVNDVLDNETTVQFIGLEFGCTIDIDSSEQDKLCIESNTVKEEIQETDPSQLIIRPPIVAFMGHVDHGKTTLIDSLRKSNVAAVEAGAITQHMGAFCCSTPVGNITILDTPGHEAFSAMRARGAEVCDIVVLVVAGDEGIKEQTLEAVKHARAANITIVVAINKCDKPNFNADTVYRQLSEINLLPEAWGGTTVTINTSAKTGEGLSELLEMLALQAEVLELKANPEARARGIVIESELHKGLGAVATILVQNGTLHLGEALVFNDCYGKVKTMHNEHNQLMTSASPSVPALITGLSSMPKAGDPFVVVKNEKTAKEIVNARIAGQQKFALQKKRPNFDAMLQNKKILKLIIKADVQGSIEALSSSVLKIVSDKVSAEILSSSVGEISESDIRLAAASKAVIIGFHTGIESHAESLIKNLGVKVHLFNIIYHAVDAVKEMMTALLDPIAEERNLGSAEIKETFKSSQLGTIYGCLVSEGVMTRNQKVRVVRNNEVLWKGNLSSLKRIKEDVKEVKKGLECGILLEGYQNAQVGDILQCYEVIYHPQKL.

A disordered region spans residues 1 to 289 (MKIKNAQLTK…KHYDEHSVQR (289 aa)). Over residues 31-48 (SSSEKPTTKVPEKVAKEK) the composition is skewed to basic and acidic residues. Positions 81–104 (RSSFASEDSTIPSPVSVDTESTAF) are enriched in polar residues. Positions 105-118 (SPPVVEEVVSPLES) are enriched in low complexity. Composition is skewed to basic and acidic residues over residues 144-158 (PPKK…KEPP) and 186-198 (PKKE…KERT). The segment covering 199 to 211 (GTVQTKPQQSSEV) has biased composition (polar residues). Positions 228 to 260 (YRRDTSKRPGSDFRDRSKKDDSPKAFTGRDRYG) are enriched in basic and acidic residues. Positions 271-280 (RKKRVQKTKK) are enriched in basic residues. One can recognise a tr-type G domain in the interval 380–549 (IRPPIVAFMG…ALQAEVLELK (170 aa)). The interval 389–396 (GHVDHGKT) is G1. 389–396 (GHVDHGKT) contributes to the GTP binding site. The interval 414–418 (AITQH) is G2. A G3 region spans residues 435–438 (DTPG). GTP is bound by residues 435-439 (DTPGH) and 489-492 (NKCD). The G4 stretch occupies residues 489–492 (NKCD). The G5 stretch occupies residues 525–527 (SAK).

This sequence belongs to the TRAFAC class translation factor GTPase superfamily. Classic translation factor GTPase family. IF-2 subfamily.

The protein resides in the cytoplasm. In terms of biological role, one of the essential components for the initiation of protein synthesis. Protects formylmethionyl-tRNA from spontaneous hydrolysis and promotes its binding to the 30S ribosomal subunits. Also involved in the hydrolysis of GTP during the formation of the 70S ribosomal complex. This is Translation initiation factor IF-2 from Chlamydia abortus (strain DSM 27085 / S26/3) (Chlamydophila abortus).